Here is a 997-residue protein sequence, read N- to C-terminus: Protein HIR2 (997 aa).

WD repeat units lie at residues 10–48 (GISG…DTAF), 117–152 (VSQS…TRSA), 153–194 (NKKE…VVYH), 274–319 (VHSP…PLFA), and 323–362 (ISDS…LGKT). Residues 408–584 (ADNSSNILST…RKPKEDALGN (177 aa)) form a disordered region. Over residues 409–446 (DNSSNILSTDTNTNEKNLSTVNTTEPQTNSQSSSYNNK) the composition is skewed to polar residues. Positions 464–480 (SDEKAKNLEARPIEAKS) are enriched in basic and acidic residues. A compositionally biased stretch (polar residues) spans 491-501 (SKSSSVTTSDN). The span at 518-538 (TEKKTKPDKKSIKSENGESKV) shows a compositional bias: basic and acidic residues. Polar residues predominate over residues 539–567 (NKAQNTISPKESNTTDNKSTTPDFKNPSY). WD repeat units follow at residues 665-706 (LFQD…IIPP) and 708-745 (TIGV…LEFP).

It belongs to the WD repeat HIR1 family.

It is found in the nucleus. Functionally, required for replication-independent chromatin assembly and for the periodic repression of histone gene transcription during the cell cycle. In Candida glabrata (strain ATCC 2001 / BCRC 20586 / JCM 3761 / NBRC 0622 / NRRL Y-65 / CBS 138) (Yeast), this protein is Protein HIR2 (HIR2).